A 208-amino-acid chain; its full sequence is Ras-related protein Rab6 (208 aa).

19-27 contributes to the GTP binding site; it reads GEQSVGKTS. Positions 41–49 match the Effector region motif; that stretch reads YQATIGIDF. GTP contacts are provided by residues 67-71, 125-128, and 155-157; these read DTAGQ, NKTD, and SAK. A disordered region spans residues 176–208; that stretch reads MDSTENKPSEDMQEVVLKDSPNETKDPEGGCAC. Over residues 179 to 208 the composition is skewed to basic and acidic residues; sequence TENKPSEDMQEVVLKDSPNETKDPEGGCAC.

This sequence belongs to the small GTPase superfamily. Rab family. In terms of assembly, interacts with Rich and Act5C. Interacts with BicD (via C-terminal domain). Interacts (in GTP-bound) with GCC1/CG10703 and cbs. Interacts with Gorab (via C-terminus); binds to a Gorab homodimer, this interaction seems to be required for trans-Golgi localization of Gorab. Expressed in larval eye, wing and leg imaginal disks and in salivary gland. Expressed in the larval optic lobe, showing an enrichment in the neuropil. In the adult brain, expressed in photoreceptors and mushroom body.

The protein resides in the golgi apparatus membrane. It localises to the synapse. Its subcellular location is the perikaryon. Functionally, protein transport. Regulator of membrane traffic from the Golgi apparatus towards the endoplasmic reticulum (ER). Mediates membrane trafficking during egg chamber growth and organization, possibly upstream of exocyst component Sec5. Also during oogenesis, plays a role, together with BicD but independently of Sec5, in the polarization of the oocyte microtubule cytoskeleton, in the localization of oskar mRNA and in the anterodorsal secretion of grk. Required for anterograde opsin transport through the ER-Golgi complex. Plays a role, together with Rich, in regulating CadN transport in photoreceptor cells which is required for the formation of normal synaptic connections between axons from the inner photoreceptor cells in the eye and postsynaptic cells in the brain medulla layer M6. Necessary for proper development of bristle shafts of macrochaete and microchaete on the head, thorax and scutellum. Modulates Notch signaling. As a key regulator of vesicular traffic, plays a critical role in the regulation of actin organization and is required for normal rates of phagocytic uptake during phagocytosis involved in defense against viral and fungal infection. The polypeptide is Ras-related protein Rab6 (Drosophila melanogaster (Fruit fly)).